Consider the following 225-residue polypeptide: DnaA regulatory inactivator Hda (225 aa).

Belongs to the DnaA family. HdA subfamily. The active form seems to be an ADP-bound monomer. Forms the RIDA complex (regulatory inactivation of DnaA) of ATP-DnaA, ADP-Hda and the DNA-loaded beta sliding clamp (dnaN).

Its function is as follows. Mediates the interaction of DNA replication initiator protein DnaA with DNA polymerase subunit beta sliding clamp (dnaN). Stimulates hydrolysis of ATP-DnaA to ADP-DnaA, rendering DnaA inactive for reinitiation, a process called regulatory inhibition of DnaA or RIDA. This Klebsiella pneumoniae (strain 342) protein is DnaA regulatory inactivator Hda.